The following is a 1749-amino-acid chain: Nucleoporin NUP188 (1749 aa).

Ala2 carries the N-acetylalanine modification. Disordered stretches follow at residues 1514–1542 (VAQR…TEAS) and 1707–1733 (PSSP…PESQ). Low complexity predominate over residues 1521-1537 (PPSAASAAPSSSKQPAA). 2 positions are modified to phosphoserine: Ser1523 and Ser1709. Residue Thr1712 is modified to Phosphothreonine. A Phosphoserine modification is found at Ser1717. Polar residues predominate over residues 1719 to 1732 (QGKSTSLSKASPES).

The protein belongs to the Nup188 family. As to quaternary structure, part of the nuclear pore complex (NPC).

Its subcellular location is the nucleus. It localises to the nuclear pore complex. In terms of biological role, component of the nuclear pore complex (NPC), a complex required for the trafficking across the nuclear envelope. Required for proper protein transport into the nucleus. The chain is Nucleoporin NUP188 (NUP188) from Homo sapiens (Human).